The following is a 320-amino-acid chain: MRKKKNLKIGIVMDSITLINIKKDSSFAILLEAQKRQHEIYYMEMNDLYLRKGQSYATTKSIEIQKNQNNYFKFIQKKDISLNELDAILMRKDPPFNTEFIYATYILERAEEKGVLVINKPKSLRDCNEKIFISWFSRFTTDTLVTRKLSKIHNFWKEKNDIILKPLDAMGGKGVFRIKKDDPNFSVIVETLTNYEKKYCMIQTYLPEVQFGDKRILIVNGKPIPWSLTRIPKHGETRANLAVGGEGRVQKLNDKDWEIANYLAPILKKRGLILVGLDVIGDKLTEINVTSPTCICEIEEKKNISITGILIDYIEDKIYK.

In terms of domain architecture, ATP-grasp spans 130–315 (KIFISWFSRF…ITGILIDYIE (186 aa)). 156–212 (WKEKNDIILKPLDAMGGKGVFRIKKDDPNFSVIVETLTNYEKKYCMIQTYLPEVQFG) contributes to the ATP binding site. Mg(2+)-binding residues include Glu286 and Asn288.

This sequence belongs to the prokaryotic GSH synthase family. The cofactor is Mg(2+). Mn(2+) serves as cofactor.

The catalysed reaction is gamma-L-glutamyl-L-cysteine + glycine + ATP = glutathione + ADP + phosphate + H(+). It functions in the pathway sulfur metabolism; glutathione biosynthesis; glutathione from L-cysteine and L-glutamate: step 2/2. The polypeptide is Glutathione synthetase (Buchnera aphidicola subsp. Schizaphis graminum (strain Sg)).